A 253-amino-acid chain; its full sequence is Isoprenyl transferase (253 aa).

Aspartate 30 is an active-site residue. Aspartate 30 contacts Mg(2+). Residues glycine 31–arginine 34, tryptophan 35, histidine 51, and serine 79–glutamate 81 each bind substrate. Residue asparagine 82 is the Proton acceptor of the active site. Substrate is bound by residues phenylalanine 83, arginine 85, arginine 202, and arginine 208–serine 210. Glutamate 221 contacts Mg(2+).

Belongs to the UPP synthase family. Homodimer. Mg(2+) is required as a cofactor.

Functionally, catalyzes the condensation of isopentenyl diphosphate (IPP) with allylic pyrophosphates generating different type of terpenoids. The protein is Isoprenyl transferase of Chlamydia muridarum (strain MoPn / Nigg).